The following is an 83-amino-acid chain: Kappa-theraphotoxin-Cg2a (83 aa).

A signal peptide spans 1 to 21 (MKGSAFAIILGLVVLCACSFA). The propeptide occupies 22 to 53 (EDEQDQFASPNELLRSMFLESRHELIPEVEGR). Intrachain disulfides connect cysteine 55/cysteine 69, cysteine 62/cysteine 74, and cysteine 68/cysteine 78. Leucine amide is present on leucine 82.

It belongs to the neurotoxin 30 (phrixotoxin) family. As to expression, expressed by the venom gland.

The protein localises to the secreted. Inhibits voltage-gated potassium channels of the subtype Kv4.1/KCND1 with high affinity and shows weak effects on Kv4.2/KCND2 and Kv2.1/KCNB1 subtypes. The toxin modifies the gating behavior of the channel and may interact with the S3-S4 extracellular loop. The protein is Kappa-theraphotoxin-Cg2a of Chilobrachys guangxiensis (Chinese earth tiger tarantula).